Consider the following 383-residue polypeptide: RNA-binding motif, single-stranded-interacting protein 2 (383 aa).

Met1 carries the post-translational modification N-acetylmethionine. A disordered region spans residues 28-56 (QMAPPSPRNSTPNSSGGGGGGSGGNDQLS). Positions 42–51 (SGGGGGGSGG) are enriched in gly residues. 2 consecutive RRM domains span residues 58 to 131 (TNLY…MAKQ) and 137 to 222 (TNLY…FADG). A Phosphoserine modification is found at Ser108. Phosphoserine is present on Ser287. The disordered stretch occupies residues 352 to 383 (SSVSAEESNGQQNQLAVEPPSDHGVYPFQFSK).

The protein localises to the nucleus. This Mus musculus (Mouse) protein is RNA-binding motif, single-stranded-interacting protein 2 (Rbms2).